We begin with the raw amino-acid sequence, 328 residues long: uncharacterized protein (328 aa).

Residues 1 to 22 (MPVKPNQPRPSTKQDPSSGASR) form a disordered region. Residues 9–21 (RPSTKQDPSSGAS) are compositionally biased toward polar residues. The next 6 helical transmembrane spans lie at 66 to 86 (FSFL…GFVL), 126 to 146 (TVGL…IGNL), 176 to 196 (FLSL…TSVA), 221 to 241 (LIAL…ILWV), 255 to 275 (GTLM…VALP), and 290 to 310 (IGLM…AAWI).

To E.coli YhjD.

It is found in the cell inner membrane. This is an uncharacterized protein from Dickeya dadantii (strain 3937) (Erwinia chrysanthemi (strain 3937)).